The primary structure comprises 663 residues: UvrABC system protein B (663 aa).

The Helicase ATP-binding domain occupies 31 to 271; that stretch reads DNIESGEKAQ…EQSISKIQAE (241 aa). 44–51 contacts ATP; sequence GATGTGKT. Positions 97–120 match the Beta-hairpin motif; the sequence is YYDYYQPEAYVPSSDTYIEKDSSV. Residues 435 to 601 enclose the Helicase C-terminal domain; sequence QMDDLLGEIN…TIKKDIRDLI (167 aa). The UVR domain maps to 627 to 662; the sequence is QEAIKQLQKNMQEAAELLDFELAAQLRDLILELKAI.

The protein belongs to the UvrB family. In terms of assembly, forms a heterotetramer with UvrA during the search for lesions. Interacts with UvrC in an incision complex.

The protein resides in the cytoplasm. Functionally, the UvrABC repair system catalyzes the recognition and processing of DNA lesions. A damage recognition complex composed of 2 UvrA and 2 UvrB subunits scans DNA for abnormalities. Upon binding of the UvrA(2)B(2) complex to a putative damaged site, the DNA wraps around one UvrB monomer. DNA wrap is dependent on ATP binding by UvrB and probably causes local melting of the DNA helix, facilitating insertion of UvrB beta-hairpin between the DNA strands. Then UvrB probes one DNA strand for the presence of a lesion. If a lesion is found the UvrA subunits dissociate and the UvrB-DNA preincision complex is formed. This complex is subsequently bound by UvrC and the second UvrB is released. If no lesion is found, the DNA wraps around the other UvrB subunit that will check the other stand for damage. This Streptococcus equi subsp. zooepidemicus (strain MGCS10565) protein is UvrABC system protein B.